The sequence spans 89 residues: Small ribosomal subunit protein uS15 (89 aa).

Belongs to the universal ribosomal protein uS15 family. In terms of assembly, part of the 30S ribosomal subunit. Forms a bridge to the 50S subunit in the 70S ribosome, contacting the 23S rRNA.

Its function is as follows. One of the primary rRNA binding proteins, it binds directly to 16S rRNA where it helps nucleate assembly of the platform of the 30S subunit by binding and bridging several RNA helices of the 16S rRNA. In terms of biological role, forms an intersubunit bridge (bridge B4) with the 23S rRNA of the 50S subunit in the ribosome. In Escherichia coli O139:H28 (strain E24377A / ETEC), this protein is Small ribosomal subunit protein uS15.